A 439-amino-acid polypeptide reads, in one-letter code: Proline--tRNA ligase (439 aa).

The protein belongs to the class-II aminoacyl-tRNA synthetase family. ProS type 2 subfamily. Homodimer.

The protein localises to the cytoplasm. It catalyses the reaction tRNA(Pro) + L-proline + ATP = L-prolyl-tRNA(Pro) + AMP + diphosphate. Functionally, catalyzes the attachment of proline to tRNA(Pro) in a two-step reaction: proline is first activated by ATP to form Pro-AMP and then transferred to the acceptor end of tRNA(Pro). This chain is Proline--tRNA ligase, found in Rhodopseudomonas palustris (strain BisB18).